We begin with the raw amino-acid sequence, 397 residues long: Argininosuccinate synthase (397 aa).

Residues alanine 9–serine 17 and alanine 35 contribute to the ATP site. L-citrulline is bound by residues tyrosine 88 and serine 93. Glycine 117 is a binding site for ATP. 3 residues coordinate L-aspartate: threonine 119, asparagine 123, and aspartate 124. Asparagine 123 contacts L-citrulline. Arginine 127 contributes to the L-citrulline binding site.

The protein belongs to the argininosuccinate synthase family. Type 1 subfamily. In terms of assembly, homotetramer.

The protein localises to the cytoplasm. It carries out the reaction L-citrulline + L-aspartate + ATP = 2-(N(omega)-L-arginino)succinate + AMP + diphosphate + H(+). It participates in amino-acid biosynthesis; L-arginine biosynthesis; L-arginine from L-ornithine and carbamoyl phosphate: step 2/3. The protein is Argininosuccinate synthase of Xanthomonas campestris pv. campestris (strain ATCC 33913 / DSM 3586 / NCPPB 528 / LMG 568 / P 25).